Consider the following 1226-residue polypeptide: MSKLKVIPEKSLTNNSRIVGLLAQLEKINAEPSESDTARYVTSKILHLAQSQEKTRREMTAKGSTGMEILLSTLENTKDLQTTLNILSILVELVSAGGGRRVSFLVTKGGSQILLQLLMNASKESPPHEDLMVQIHSILAKIGPKDKKFGVKARINGALNITLNLVKQNLQNHRLVLPCLQLLRVYSANSVNSVSLGKNGVVELMFKIIGPFSKKNSSLIKVALDTLAALLKSKTNARRAVDRGYVQVLLTIYVDWHRHDNRHRNMLIRKGILQSLKSVTNIKLGRKAFIDANGMKILYNTSQECLAVRTLDPLVNTSSLIMRKCFPKNRLPLPTIKSSFHFQLPVIPVTGPVAQLYSLPPEVDDVVDESDDNDDIDVEAENETENEDDLDQNFKNDDIETDINKLKPQQEPGRTIEDLKMYEHLFPELVDDFQDYDLISKEPKPFVFEGKVRGPIVVPTAGEETSGNSGNLRKVVMKENISSKGDEGEKKSTFMDLAKEDIKDNDRTLQQQPGDQNRTISSVHGLNNDIVKALDRITLQNIPSQTAPGFTAEMKKDCSLPLTVLTCAKACPHMATCGNVLFEGRTVQLGKLCCTGVETEDDEDTESNSSVEQASVEVPDGPTLHDPDLYIEIVKNTKSVPEYSEVAYPDYFGHIPPPFKEPILERPYGVQRTKIAQDIERLIHQSDIIDRVVYDLDNPNYTIPEEGDILKFNSKFESGNLRKVIQIRKNEYDLILNSDINSNHYHQWFYFEVSGMRPGVAYRFNIINCEKSNSQFNYGMQPLMYSVQEALNARPWWIRMGTDICYYKNHFSRSSVAAGGQKGKSYYTITFTVNFPHKDDVCYFAYHYPYTYSTLQMHLQKLESAHNPQQIYFRKDVLCETLSGNSCPLVTITAMPESNYYEHICHFRNRPYVFLSARVHPGETNASWVMKGTLEYLMSNNPTAQSLRESYIFKIVPMLNPDGVINGNHRCSLSGEDLNRQWQSPSPDLHPTIYHAKGLLQYLAAVKRLPLVYCDYHGHSRKKNVFMYGCSIKETVWHTNDNATSCDVVEDTGYRTLPKILSHIAPAFCMSSCSFVVEKSKESTARVVVWREIGVQRSYTMESTLCGCDQGKYKGLQIGTRELEEMGAKFCVGLLRLKRLTSPLEYNLPSSLLDFENDLIESSCKVTSPTTYVLDEDEPRFLEEVDYSAESNDELDIELAENVGDYEPSAQEEVLSDSELSRTYLP.

The interval 599–619 is disordered; that stretch reads TEDDEDTESNSSVEQASVEVP. A Peptidase M14 domain is found at 848 to 1138; that stretch reads YPYTYSTLQM…KFCVGLLRLK (291 aa). Positions 920, 923, and 1017 each coordinate Zn(2+). The Proton donor/acceptor role is filled by Glu-1102. A Phosphoserine modification is found at Ser-1168. The disordered stretch occupies residues 1206-1226; that stretch reads YEPSAQEEVLSDSELSRTYLP.

This sequence belongs to the peptidase M14 family. In terms of assembly, interacts with MYLK. Zn(2+) serves as cofactor.

It localises to the cytoplasm. It is found in the cytosol. The protein localises to the nucleus. Its subcellular location is the mitochondrion. It catalyses the reaction (L-glutamyl)(n+1)-gamma-L-glutamyl-L-glutamyl-[protein] + H2O = (L-glutamyl)(n)-gamma-L-glutamyl-L-glutamyl-[protein] + L-glutamate. The enzyme catalyses C-terminal L-alpha-aminoacyl-L-glutamyl-L-glutamyl-[tubulin] + H2O = C-terminal L-alpha-aminoacyl-L-glutamyl-[tubulin] + L-glutamate. Its function is as follows. Metallocarboxypeptidase that mediates protein deglutamylation of tubulin and non-tubulin target proteins. Catalyzes the removal of polyglutamate side chains present on the gamma-carboxyl group of glutamate residues within the C-terminal tail of alpha- and beta-tubulin. Specifically cleaves tubulin long-side-chains, while it is not able to remove the branching point glutamate. Also catalyzes the removal of polyglutamate residues from the carboxy-terminus of alpha-tubulin as well as non-tubulin proteins such as MYLK. Involved in KLF4 deglutamylation which promotes KLF4 proteasome-mediated degradation, thereby negatively regulating cell pluripotency maintenance and embryogenesis. The polypeptide is Cytosolic carboxypeptidase 1 (Homo sapiens (Human)).